The sequence spans 381 residues: Dual-specificity RNA methyltransferase RlmN (381 aa).

Glu-96 serves as the catalytic Proton acceptor. The region spanning Thr-102 to Asp-342 is the Radical SAM core domain. A disulfide bond links Cys-109 and Cys-345. [4Fe-4S] cluster-binding residues include Cys-116, Cys-120, and Cys-123. Residues Gly-170–Glu-171, Ser-202, Ser-224–His-226, and Asn-302 contribute to the S-adenosyl-L-methionine site. Cys-345 acts as the S-methylcysteine intermediate in catalysis.

Belongs to the radical SAM superfamily. RlmN family. The cofactor is [4Fe-4S] cluster.

Its subcellular location is the cytoplasm. It catalyses the reaction adenosine(2503) in 23S rRNA + 2 reduced [2Fe-2S]-[ferredoxin] + 2 S-adenosyl-L-methionine = 2-methyladenosine(2503) in 23S rRNA + 5'-deoxyadenosine + L-methionine + 2 oxidized [2Fe-2S]-[ferredoxin] + S-adenosyl-L-homocysteine. The catalysed reaction is adenosine(37) in tRNA + 2 reduced [2Fe-2S]-[ferredoxin] + 2 S-adenosyl-L-methionine = 2-methyladenosine(37) in tRNA + 5'-deoxyadenosine + L-methionine + 2 oxidized [2Fe-2S]-[ferredoxin] + S-adenosyl-L-homocysteine. Functionally, specifically methylates position 2 of adenine 2503 in 23S rRNA and position 2 of adenine 37 in tRNAs. m2A2503 modification seems to play a crucial role in the proofreading step occurring at the peptidyl transferase center and thus would serve to optimize ribosomal fidelity. In Pseudomonas putida (strain GB-1), this protein is Dual-specificity RNA methyltransferase RlmN.